We begin with the raw amino-acid sequence, 519 residues long: Exodeoxyribonuclease 7 large subunit (519 aa).

The segment at valine 500–leucine 519 is disordered.

Belongs to the XseA family. In terms of assembly, heterooligomer composed of large and small subunits.

The protein resides in the cytoplasm. The catalysed reaction is Exonucleolytic cleavage in either 5'- to 3'- or 3'- to 5'-direction to yield nucleoside 5'-phosphates.. Functionally, bidirectionally degrades single-stranded DNA into large acid-insoluble oligonucleotides, which are then degraded further into small acid-soluble oligonucleotides. The sequence is that of Exodeoxyribonuclease 7 large subunit from Cereibacter sphaeroides (strain KD131 / KCTC 12085) (Rhodobacter sphaeroides).